The following is a 391-amino-acid chain: GTPase Obg (391 aa).

In terms of domain architecture, Obg spans 1–159 (MKFIDEALIR…RDLLLELMLL (159 aa)). Residues 160 to 333 (ADVGMLGLPN…LTRDIMDFIE (174 aa)) enclose the OBG-type G domain. GTP is bound by residues 166-173 (GLPNAGKS), 191-195 (FTTLV), 213-216 (DIPG), 283-286 (NKID), and 314-316 (SAA). Mg(2+) is bound by residues Ser-173 and Thr-193.

Belongs to the TRAFAC class OBG-HflX-like GTPase superfamily. OBG GTPase family. As to quaternary structure, monomer. Mg(2+) is required as a cofactor.

It localises to the cytoplasm. Functionally, an essential GTPase which binds GTP, GDP and possibly (p)ppGpp with moderate affinity, with high nucleotide exchange rates and a fairly low GTP hydrolysis rate. Plays a role in control of the cell cycle, stress response, ribosome biogenesis and in those bacteria that undergo differentiation, in morphogenesis control. The protein is GTPase Obg of Actinobacillus pleuropneumoniae serotype 7 (strain AP76).